We begin with the raw amino-acid sequence, 88 residues long: HssA/B-like protein 61 (88 aa).

It belongs to the hssA/B family.

In Dictyostelium discoideum (Social amoeba), this protein is HssA/B-like protein 61 (hssl61).